Reading from the N-terminus, the 515-residue chain is Meiotically up-regulated gene 68 protein (515 aa).

Residues 165-204 (LHSIESERNESSLSLDSGESEKKSEEDNGNGEQNYIPEQY) are disordered.

In terms of biological role, has a role in meiosis. This Schizosaccharomyces pombe (strain 972 / ATCC 24843) (Fission yeast) protein is Meiotically up-regulated gene 68 protein (mug68).